Reading from the N-terminus, the 349-residue chain is tRNA N6-adenosine threonylcarbamoyltransferase (349 aa).

Fe cation is bound by residues His116 and His120. Substrate contacts are provided by residues Leu139 to Gly143, Asp172, Gly185, and Asn283. Asp311 contacts Fe cation.

This sequence belongs to the KAE1 / TsaD family. Requires Fe(2+) as cofactor.

The protein localises to the cytoplasm. It carries out the reaction L-threonylcarbamoyladenylate + adenosine(37) in tRNA = N(6)-L-threonylcarbamoyladenosine(37) in tRNA + AMP + H(+). Its function is as follows. Required for the formation of a threonylcarbamoyl group on adenosine at position 37 (t(6)A37) in tRNAs that read codons beginning with adenine. Is involved in the transfer of the threonylcarbamoyl moiety of threonylcarbamoyl-AMP (TC-AMP) to the N6 group of A37, together with TsaE and TsaB. TsaD likely plays a direct catalytic role in this reaction. In Colwellia psychrerythraea (strain 34H / ATCC BAA-681) (Vibrio psychroerythus), this protein is tRNA N6-adenosine threonylcarbamoyltransferase.